Here is a 247-residue protein sequence, read N- to C-terminus: Oil body-associated protein 2A (247 aa).

Positions 1–26 (MASSDERPGAYPARDGSENLPPGDPK) are disordered.

Belongs to the OBAP family.

This is Oil body-associated protein 2A from Arabidopsis thaliana (Mouse-ear cress).